Reading from the N-terminus, the 393-residue chain is Acetate kinase (393 aa).

Asn-6 is a Mg(2+) binding site. Position 13 (Lys-13) interacts with ATP. Arg-87 lines the substrate pocket. Catalysis depends on Asp-143, which acts as the Proton donor/acceptor. Residues 203 to 207 (HLGNG), 278 to 280 (DMR), and 326 to 330 (GIGEN) each bind ATP. A Mg(2+)-binding site is contributed by Glu-380.

This sequence belongs to the acetokinase family. As to quaternary structure, homodimer. Requires Mg(2+) as cofactor. Mn(2+) is required as a cofactor.

The protein localises to the cytoplasm. The enzyme catalyses acetate + ATP = acetyl phosphate + ADP. It participates in metabolic intermediate biosynthesis; acetyl-CoA biosynthesis; acetyl-CoA from acetate: step 1/2. Its function is as follows. Catalyzes the formation of acetyl phosphate from acetate and ATP. Can also catalyze the reverse reaction. This chain is Acetate kinase, found in Mycoplasma capricolum subsp. capricolum (strain California kid / ATCC 27343 / NCTC 10154).